A 632-amino-acid chain; its full sequence is Lipoma-preferred partner homolog (632 aa).

2 disordered regions span residues 1–118 (MSHP…RSSL) and 135–249 (SSPY…RSYN). The segment covering 26–40 (THSFGTPSISVSTQQ) has biased composition (polar residues). The span at 41–53 (PPKKFAPVVAPKP) shows a compositional bias: low complexity. Position 109 is an N6-acetyllysine (lysine 109). Serine 117 and serine 152 each carry phosphoserine. Over residues 144 to 160 (PGSSSSIASPPVSTPVT) the composition is skewed to low complexity. Composition is skewed to polar residues over residues 172-182 (PLTATKKSATK) and 206-239 (SYST…SSGQ). Tyrosine 241 is subject to Phosphotyrosine. Arginine 246 carries the omega-N-methylarginine modification. Lysine 324 is covalently cross-linked (Glycyl lysine isopeptide (Lys-Gly) (interchain with G-Cter in SUMO1)). LIM zinc-binding domains lie at 434 to 493 (GRCA…INTL), 494 to 554 (EQCS…KFAP), and 555 to 623 (RCSV…RIRV).

The protein belongs to the zyxin/ajuba family. Interacts with PDZ domains of SCRIB, with VASP and with ACTN1/alpha-actinin.

The protein localises to the nucleus. It is found in the cytoplasm. It localises to the cell junction. Its function is as follows. May play a structural role at sites of cell adhesion in maintaining cell shape and motility. In addition to these structural functions, it may also be implicated in signaling events and activation of gene transcription. May be involved in signal transduction from cell adhesion sites to the nucleus allowing successful integration of signals arising from soluble factors and cell-cell adhesion. Also suggested to serve as a scaffold protein upon which distinct protein complexes are assembled in the cytoplasm and in the nucleus. This is Lipoma-preferred partner homolog (Lpp) from Rattus norvegicus (Rat).